A 206-amino-acid chain; its full sequence is Large ribosomal subunit protein uL4 (206 aa).

This sequence belongs to the universal ribosomal protein uL4 family. As to quaternary structure, part of the 50S ribosomal subunit.

One of the primary rRNA binding proteins, this protein initially binds near the 5'-end of the 23S rRNA. It is important during the early stages of 50S assembly. It makes multiple contacts with different domains of the 23S rRNA in the assembled 50S subunit and ribosome. In terms of biological role, forms part of the polypeptide exit tunnel. This chain is Large ribosomal subunit protein uL4, found in Cereibacter sphaeroides (strain KD131 / KCTC 12085) (Rhodobacter sphaeroides).